The sequence spans 439 residues: Mitochondrial distribution and morphology protein 10 (439 aa).

A disordered region spans residues 275-305; sequence LPDATPPSFQVPSSSSSSSNPVSPSTSQPPT. Residues 280–305 show a composition bias toward low complexity; that stretch reads PPSFQVPSSSSSSSNPVSPSTSQPPT.

This sequence belongs to the MDM10 family. Component of the ER-mitochondria encounter structure (ERMES) or MDM complex, composed of MMM1, MDM10, MDM12 and MDM34. Associates with the mitochondrial outer membrane sorting assembly machinery SAM(core) complex.

The protein resides in the mitochondrion outer membrane. Functionally, component of the ERMES/MDM complex, which serves as a molecular tether to connect the endoplasmic reticulum and mitochondria. Components of this complex are involved in the control of mitochondrial shape and protein biogenesis and may function in phospholipid exchange. MDM10 is involved in the late assembly steps of the general translocase of the mitochondrial outer membrane (TOM complex). Functions in the TOM40-specific route of the assembly of outer membrane beta-barrel proteins, including the association of TOM40 with the receptor TOM22 and small TOM proteins. Can associate with the SAM(core) complex as well as the MDM12-MMM1 complex, both involved in late steps of the major beta-barrel assembly pathway, that is responsible for biogenesis of all outer membrane beta-barrel proteins. May act as a switch that shuttles between both complexes and channels precursor proteins into the TOM40-specific pathway. Plays a role in mitochondrial morphology and in the inheritance of mitochondria. The protein is Mitochondrial distribution and morphology protein 10 of Laccaria bicolor (strain S238N-H82 / ATCC MYA-4686) (Bicoloured deceiver).